A 169-amino-acid chain; its full sequence is MPLLDSFKVDHTRMNAPAVRVAKTMTTPKGDTITVFDLRFVRPNIEILSPRGIHTMEHLFAGFMRDHLNSDTVEIIDISPMGCRTGFYMSLIGSPSAEEVAKAWEASMRDALEKVPDETKIPELNEFQCGSYKEHSLADAHEIVRNVLKQPIGINRNKDLALDEKLLNP.

Positions 54, 58, and 129 each coordinate Fe cation.

Belongs to the LuxS family. Homodimer. The cofactor is Fe cation.

The enzyme catalyses S-(5-deoxy-D-ribos-5-yl)-L-homocysteine = (S)-4,5-dihydroxypentane-2,3-dione + L-homocysteine. Involved in the synthesis of autoinducer 2 (AI-2) which is secreted by bacteria and is used to communicate both the cell density and the metabolic potential of the environment. The regulation of gene expression in response to changes in cell density is called quorum sensing. Catalyzes the transformation of S-ribosylhomocysteine (RHC) to homocysteine (HC) and 4,5-dihydroxy-2,3-pentadione (DPD). The chain is S-ribosylhomocysteine lyase from Glaesserella parasuis serovar 5 (strain SH0165) (Haemophilus parasuis).